The sequence spans 686 residues: Asparagine-rich protein (686 aa).

The first 18 residues, 1-18, serve as a signal peptide directing secretion; sequence MKGTSALLLIGFFHATIS. Disordered stretches follow at residues 34–73, 125–148, and 201–236; these read KRGNLNTGGQITSNSAILGDVNAGSKLSEPPKRRNTDKTA, SLTSDTKTTTRTSQTSSTRASSSI, and ITRQKSENTQGNSIVRNGGTNSLNIPSSTRRSQPPN. Over residues 37-49 the composition is skewed to polar residues; the sequence is NLNTGGQITSNSA. The span at 62-73 shows a compositional bias: basic and acidic residues; sequence EPPKRRNTDKTA.

Prismatic layer of shell (at protein level). Expressed primarily in the mantle with highest level in the mantle edge and lower level in the mantle pallium.

The protein resides in the secreted. The sequence is that of Asparagine-rich protein from Margaritifera margaritifera (Freshwater pearl mussel).